We begin with the raw amino-acid sequence, 476 residues long: MNSAPLSTPAPVTLPVRSIPGSYGLPLVGPIADRLDYFWFQKPENFFTKRMEKHKSTVFRTNVPPCFPFFGSVNPNVVAVLDVKSFSHLFDMEIVEKANVLVGDFMPSVVYTGDMRVCAYLDTSEPKHAQIKNFSQDILKRGSKTWVPTLLKELDTMFTTFEADLSKSNTASLLPALQKFLFNFFSLTILGADPSVSPEIANSGYIFLDSWLAIQLAPTVSIGVLQPLEEILVHSFAYPFFLVKGNYEKLVQFVKNEAKEVLSRAQTEFQLTEQEAIHNLLFILGFNAFGGFSIFLPTLLGNLGDEKNADMQEKLRKEVRDKVGVNPENLSFESVKEMELVQSFVYETLRLSPPVPSQYARARKDFKLSSHDSVYEIKKGELLCGYQPLVMKDPKVFDEPEKFVLERFTKEKGKELLNYLFWSNGPQTGRPTESNKQCAAKDMVTLTASLIVAYIFQKYDSVSFSSGSLTSVKKAS.

A helical membrane pass occupies residues 280–300 (LLFILGFNAFGGFSIFLPTLL). Cys-438 is a heme binding site.

The protein belongs to the cytochrome P450 family. It depends on heme as a cofactor. As to expression, highly expressed in developing flowers and in young leaves. Detected in stems and immature green fruits, but not in mature green and red fruits.

Its subcellular location is the plastid. The protein resides in the chloroplast outer membrane. Reversibly inhibited by nordihydroguaiaretic acid (NDGA) and irreversibly by salicylic acid. Its function is as follows. Cytochrome P450 of the CYP74B subfamily involved in the biosynthesis of traumatin and C6 aldehydes. Metabolizes 13- but not 9-hydroperoxides of linoleic and linolenic acids. Can use 15S-hydroperoxy-11(Z),13(E),17(Z)-eicosatrienoic acid (15-HPET) and 13S-hydroperoxy-9(Z),11(E),15(Z)-octadecatrienoic acid (13-HPOT) as substrates, but only 5% activity with 13S-hydroperoxy-9(Z),11(E)-octadecadienoic acid (13-HPOD). Produces n-hexanal and 12-oxo-9(Z)-dodecanoic acid from 13-HPOD. In Solanum lycopersicum (Tomato), this protein is Fatty acid hydroperoxide lyase, chloroplastic.